The primary structure comprises 726 residues: MGFLIGGSCFVPSVPLHSRFLSSPSSSSSSSPSSSQFGLLCSSNVAKFKRRRPTLASLNQEDGYEYDVASAKRRAFLLVGISVLPFLQLRSPALADERGNEIKTSKVDLETEVAVVSEGTSPNPFLALLNGLGIFSAGVLGALYALARQDTKAAEETIESLKNQLKDRERALVLKEKDFEAKLQHEQEERKKEVEKAKEEQLSLINQLNSAKDLVTELGRELSSEKKLCEKLKDQIESLENSLSKAGEDKEALETKLREKLDLVEGLQDRINLLSLELKDSEEKAQRFNASLAKKEAELKELNSIYTQTSRDLAEAKLEIKQQKEELIRTQSELDSKNSAIEELNTRITTLVAEKESYIQKLDSISKDYSALKLTSETQAAADAELISRKEQEIQQLNENLDRALDDVNKSKDKVADLTEKYEDSKRMLDIELTTVKNLRHELEGTKKTLQASRDRVSDLETMLDESRALCSKLESELAIVHEEWKEAKERYERNLDAEKQKNEISASELALEKDLRRRVKDELEGVTHELKESSVKNQSLQKELVEIYKKVETSNKELEEEKKTVLSLNKEVKGMEKQILMEREARKSLETDLEEAVKSLDEMNKNTSILSRELEKVNTHASNLEDEKEVLQRSLGEAKNASKEAKENVEDAHILVMSLGKEREVLEKKVKKLEEDLGSAKGEILRMRSQPDSVKAVNSTDNKEKSDNTVTVKKVVRRRKSSTSS.

The N-terminal 41 residues, 1–41, are a transit peptide targeting the chloroplast; it reads MGFLIGGSCFVPSVPLHSRFLSSPSSSSSSSPSSSQFGLLC. The transit peptide at 42–95 directs the protein to the thylakoid; the sequence is SSNVAKFKRRRPTLASLNQEDGYEYDVASAKRRAFLLVGISVLPFLQLRSPALA. The Lumenal, thylakoid portion of the chain corresponds to 96–124; it reads DERGNEIKTSKVDLETEVAVVSEGTSPNP. Residues 125–145 traverse the membrane as a helical segment; it reads FLALLNGLGIFSAGVLGALYA. A coiled-coil region spans residues 144–691; it reads YALARQDTKA…KGEILRMRSQ (548 aa). The Stromal portion of the chain corresponds to 146-726; the sequence is LARQDTKAAE…VRRRKSSTSS (581 aa). Residues 678 to 726 form a disordered region; the sequence is LGSAKGEILRMRSQPDSVKAVNSTDNKEKSDNTVTVKKVVRRRKSSTSS. Positions 691-701 are enriched in polar residues; sequence QPDSVKAVNST. A Nuclear localization signal motif is present at residues 715-722; sequence KVVRRRKS. Residues 715–726 show a composition bias toward basic residues; sequence KVVRRRKSSTSS.

Interacts with PTST2; the interaction is essential for the initiation of starch granules biosynthesis in leaf chloroplasts, for the correct location of the process in the stromal spaces between the thylakoid membranes, and for the association of PTST2 with the thylakoid membranes. Predicted to be translocated into the thylakoid by the Tat system. The position of the transit peptide cleavages have not been experimentally proven.

Its subcellular location is the plastid. The protein localises to the chloroplast. The protein resides in the chloroplast thylakoid membrane. It is found in the chloroplast stroma. It localises to the chloroplast nucleoid. Its subcellular location is the nucleus. The protein localises to the nucleus matrix. DNA-binding protein required for the initiation of starch granules biosynthesis in leaf chloroplasts. Anchored to the thylakoid membranes with its C-terminus facing into the stroma where it is essential for localizing PTST2 and SS4 to the stromal spaces between the thylakoid membranes in order to begin starch granule formation. Associated with leaf chloroplastic nucleoids in vivo. Binds to various chloroplastic double-stranded DNA fragments without particular sequence specificity in vitro. May function at the interface between nucleoids and thylakoids possibly by anchoring nucleoids to the thylakoid membrane system in mature chloroplasts. Likely to participate in nuclear architecture by connecting chromatin with the nuclear matrix and potentially with the nuclear envelope. This chain is MAR-binding filament-like protein 1, found in Arabidopsis thaliana (Mouse-ear cress).